Consider the following 916-residue polypeptide: Protein O-GlcNAcase (916 aa).

Residues methionine 1–glycine 50 are disordered. The region spanning phenylalanine 60 to methionine 336 is the GH84 domain. Glycine 67, lysine 98, and aspartate 174 together coordinate a protein. The active-site Proton donor is the aspartate 175. A protein-binding positions include tyrosine 219, tryptophan 278–asparagine 280, aspartate 285, and asparagine 313. A Phosphoserine modification is found at serine 364. The segment at glutamine 440–aspartate 480 is disordered. Basic and acidic residues-rich tracts occupy residues threonine 452–aspartate 461 and valine 468–aspartate 480.

It belongs to the glycosyl hydrolase 84 family. In terms of assembly, monomer. Interacts with CLOCK. Post-translationally, proteolytically cleaved by caspase-3 during apoptosis. The fragments interact with each other; cleavage does not decrease enzyme activity. In terms of tissue distribution, detected in spleen (at protein level). Ubiquitous. Expressed at highest levels in the brain and spleen.

It localises to the nucleus. The protein localises to the cytoplasm. The catalysed reaction is 3-O-(N-acetyl-beta-D-glucosaminyl)-L-seryl-[protein] + H2O = N-acetyl-D-glucosamine + L-seryl-[protein]. The enzyme catalyses 3-O-(N-acetyl-beta-D-glucosaminyl)-L-threonyl-[protein] + H2O = L-threonyl-[protein] + N-acetyl-D-glucosamine. With respect to regulation, inhibited by Cu(2+), Hg(2+), Cd(2+) and Zn(2+) at 1 mM. Not inhibited by Co(2+), Mg(2+), Ca(2+), Mn(2+), Fe(3+) and EDTA. Also inhibited by sodium chloride at 1M and 2-amino-2-hydroxymethyl-1,3-propanediol (trishydroxymethylaminomethane) at 75 mM. Functionally, cleaves GlcNAc but not GalNAc from O-glycosylated proteins. Deglycosylates a large and diverse number of proteins, such as CRYAB, ELK1, GSDMD, LMNB1 and TAB1. Can use p-nitrophenyl-beta-GlcNAc and 4-methylumbelliferone-GlcNAc as substrates but not p-nitrophenyl-beta-GalNAc or p-nitrophenyl-alpha-GlcNAc (in vitro). Does not bind acetyl-CoA and does not have histone acetyltransferase activity. In terms of biological role, lacks enzyme activity. This is Protein O-GlcNAcase from Rattus norvegicus (Rat).